The primary structure comprises 511 residues: MTSTPKPLVLIILDGFGHSESPEYNAIFAANTPVYDRLRATQPHGLISGSGMDVGLPDGQMGNSEVGHMNLGAGRVVYQDFTRVTKAIRDGEFFENPVLTGAVDKAASAGKAVHILGLLSDGGVHSHQDHLIAMAELAAQRGAEKIYLHAFLDGRDTPPRSAQSSIELLDATFAKLGKGRIASLIGRYYAMDRDNRWDRVSAAYNLIVDSAAEYTADSALAGLQAAYAREENDEFVKATRIGEAVKVEDGDAVIFMNFRADRARELSRAFVEPDFNEFPRARLPKLAAYIGLTQYSAKIPAPAAFAPSSLDNVLGEYLAKNGKTQLRIAETEKYAHVTFFFSGGREEPFEGEERILIPSPKVATYDLQPEMNAPEVTDRIVEAIEQQRFDVIVVNYANGDMVGHTGVFEAAVKAVEALDSCVGRIVEALGKVGGEALITADHGNVEQMEDECTGQAHTAHTSEPVPFIYVGKRKVTVREGGVLADVAPTMLKLLGLEKPAEMTGTSILVDA.

Mn(2+) contacts are provided by aspartate 14 and serine 64. Serine 64 functions as the Phosphoserine intermediate in the catalytic mechanism. Residues histidine 125, 155–156 (RD), arginine 187, arginine 193, 259–262 (RADR), and lysine 333 contribute to the substrate site. Mn(2+)-binding residues include aspartate 400, histidine 404, aspartate 441, histidine 442, and histidine 460.

This sequence belongs to the BPG-independent phosphoglycerate mutase family. In terms of assembly, monomer. The cofactor is Mn(2+).

It carries out the reaction (2R)-2-phosphoglycerate = (2R)-3-phosphoglycerate. It participates in carbohydrate degradation; glycolysis; pyruvate from D-glyceraldehyde 3-phosphate: step 3/5. Its function is as follows. Catalyzes the interconversion of 2-phosphoglycerate and 3-phosphoglycerate. This chain is 2,3-bisphosphoglycerate-independent phosphoglycerate mutase, found in Pseudomonas entomophila (strain L48).